We begin with the raw amino-acid sequence, 391 residues long: Phosphopentomutase (391 aa).

Aspartate 14 contacts Mn(2+). The interval 61-88 is disordered; that stretch reads IQGVPPDPAPTAFHGRMAERSEGKDTTT. Residues 76 to 87 show a composition bias toward basic and acidic residues; the sequence is RMAERSEGKDTT. Residues aspartate 286, histidine 291, aspartate 327, histidine 328, and histidine 339 each contribute to the Mn(2+) site.

This sequence belongs to the phosphopentomutase family. Requires Mn(2+) as cofactor.

It localises to the cytoplasm. It carries out the reaction 2-deoxy-alpha-D-ribose 1-phosphate = 2-deoxy-D-ribose 5-phosphate. The catalysed reaction is alpha-D-ribose 1-phosphate = D-ribose 5-phosphate. It functions in the pathway carbohydrate degradation; 2-deoxy-D-ribose 1-phosphate degradation; D-glyceraldehyde 3-phosphate and acetaldehyde from 2-deoxy-alpha-D-ribose 1-phosphate: step 1/2. Its function is as follows. Isomerase that catalyzes the conversion of deoxy-ribose 1-phosphate (dRib-1-P) and ribose 1-phosphate (Rib-1-P) to deoxy-ribose 5-phosphate (dRib-5-P) and ribose 5-phosphate (Rib-5-P), respectively. The polypeptide is Phosphopentomutase (Anaeromyxobacter dehalogenans (strain 2CP-C)).